The following is a 203-amino-acid chain: LexA repressor (203 aa).

Residues 28 to 47 (IREIGDEFGITAKGAYDHLK) constitute a DNA-binding region (H-T-H motif). Catalysis depends on for autocatalytic cleavage activity residues S127 and K164.

This sequence belongs to the peptidase S24 family. Homodimer.

The catalysed reaction is Hydrolysis of Ala-|-Gly bond in repressor LexA.. Its function is as follows. Represses a number of genes involved in the response to DNA damage (SOS response), including recA and lexA. In the presence of single-stranded DNA, RecA interacts with LexA causing an autocatalytic cleavage which disrupts the DNA-binding part of LexA, leading to derepression of the SOS regulon and eventually DNA repair. This Leptospira interrogans serogroup Icterohaemorrhagiae serovar copenhageni (strain Fiocruz L1-130) protein is LexA repressor.